Reading from the N-terminus, the 139-residue chain is uncharacterized protein (139 aa).

In terms of domain architecture, HIT spans 5–114 (IFCKIINKEL…IPRFKNDGFG (110 aa)). The Histidine triad motif motif lies at 99–103 (HTHFH).

This is an uncharacterized protein from Borreliella burgdorferi (strain ATCC 35210 / DSM 4680 / CIP 102532 / B31) (Borrelia burgdorferi).